We begin with the raw amino-acid sequence, 61 residues long: Large ribosomal subunit protein uL30 (61 aa).

This sequence belongs to the universal ribosomal protein uL30 family. In terms of assembly, part of the 50S ribosomal subunit.

The protein is Large ribosomal subunit protein uL30 of Teredinibacter turnerae (strain ATCC 39867 / T7901).